The following is a 417-amino-acid chain: Fatty-acid peroxygenase (417 aa).

C363 is a heme binding site.

The protein belongs to the cytochrome P450 family. It depends on heme as a cofactor.

The catalysed reaction is a 1,2-saturated fatty acid + H2O2 = a 2-hydroxy fatty acid + H2O. It carries out the reaction a 2,3-saturated fatty acid + H2O2 = a 3-hydroxy fatty acid + H2O. The enzyme catalyses tetradecanoate + H2O2 = (3R)-hydroxytetradecanoate + H2O. It catalyses the reaction tetradecanoate + H2O2 = (2R)-hydroxytetradecanoate + H2O. The catalysed reaction is tetradecanoate + H2O2 = (2S)-hydroxytetradecanoate + H2O. Functionally, catalyzes the alpha- and beta-hydroxylation of myristic acid in the presence of hydrogen peroxide. The chain is Fatty-acid peroxygenase (cypC) from Bacillus subtilis (strain 168).